A 293-amino-acid polypeptide reads, in one-letter code: ATP synthase subunit a (293 aa).

6 helical membrane-spanning segments follow: residues 40-60 (DSLF…WLAA), 98-118 (FVAP…ALDL), 151-171 (DLNV…YYGI), 188-208 (FHAH…LNLI), 225-245 (MFAG…WTGF), and 264-284 (AIFH…LTLV).

Belongs to the ATPase A chain family. F-type ATPases have 2 components, CF(1) - the catalytic core - and CF(0) - the membrane proton channel. CF(1) has five subunits: alpha(3), beta(3), gamma(1), delta(1), epsilon(1). CF(0) has three main subunits: a(1), b(2) and c(9-12). The alpha and beta chains form an alternating ring which encloses part of the gamma chain. CF(1) is attached to CF(0) by a central stalk formed by the gamma and epsilon chains, while a peripheral stalk is formed by the delta and b chains.

It is found in the cell inner membrane. Functionally, key component of the proton channel; it plays a direct role in the translocation of protons across the membrane. The chain is ATP synthase subunit a from Bordetella avium (strain 197N).